The following is a 322-amino-acid chain: Cytochrome c biogenesis protein CcsA (322 aa).

7 helical membrane-spanning segments follow: residues 9-29 (IFTH…LITL), 44-64 (GMIV…IYSG), 71-91 (LYES…VPYF), 143-163 (MILS…LLVI), 226-246 (VISL…VWAN), 255-275 (WDPK…YLHI), and 287-307 (AIVA…VNLL).

Belongs to the CcmF/CycK/Ccl1/NrfE/CcsA family. As to quaternary structure, may interact with Ccs1.

Its subcellular location is the plastid. The protein localises to the chloroplast thylakoid membrane. In terms of biological role, required during biogenesis of c-type cytochromes (cytochrome c6 and cytochrome f) at the step of heme attachment. The polypeptide is Cytochrome c biogenesis protein CcsA (Lactuca sativa (Garden lettuce)).